A 429-amino-acid polypeptide reads, in one-letter code: Melanoma-associated antigen 11 (429 aa).

2 disordered regions span residues 1 to 30 (METQ…GDFG) and 188 to 215 (IFGS…IDPE). The span at 194 to 209 (DEGSGSQEKEGPSTSP) shows a compositional bias: polar residues. The 200-residue stretch at 222–421 (LHDKIIDLVH…TSYPSLYEDA (200 aa)) folds into the MAGE domain.

Expressed in tumors of several types, such as melanoma, head and neck squamous cell carcinoma, lung carcinoma and breast carcinoma. Expressed in testis, ovary, prostate, cancerous prostate, breast and adrenal tissue.

Its subcellular location is the nucleus. It localises to the cytoplasm. Acts as androgen receptor coregulator that increases androgen receptor activity by modulating the receptors interdomain interaction. May play a role in embryonal development and tumor transformation or aspects of tumor progression. The polypeptide is Melanoma-associated antigen 11 (Homo sapiens (Human)).